Consider the following 530-residue polypeptide: CTP synthase (530 aa).

Residues 1–264 form an amidoligase domain region; that stretch reads MPKLIIVTGG…GDFLTRRLRL (264 aa). Serine 13 provides a ligand contact to CTP. UTP is bound at residue serine 13. Residue 14 to 19 coordinates ATP; sequence GVGKGV. An L-glutamine-binding site is contributed by tyrosine 54. Aspartate 71 lines the ATP pocket. Mg(2+)-binding residues include aspartate 71 and glutamate 139. CTP contacts are provided by residues 146-148, 185-190, and lysine 221; these read DYE and KTKPLQ. UTP-binding positions include 185–190 and lysine 221; that span reads KTKPLQ. The region spanning 289–530 is the Glutamine amidotransferase type-1 domain; sequence SVGMCGKYVE…LLKAALFAKR (242 aa). Glycine 351 contributes to the L-glutamine binding site. Cysteine 378 acts as the Nucleophile; for glutamine hydrolysis in catalysis. Residues 379-382, glutamate 402, and arginine 459 contribute to the L-glutamine site; that span reads FGMQ. Residues histidine 504 and glutamate 506 contribute to the active site.

Belongs to the CTP synthase family. As to quaternary structure, homotetramer.

The enzyme catalyses UTP + L-glutamine + ATP + H2O = CTP + L-glutamate + ADP + phosphate + 2 H(+). It carries out the reaction L-glutamine + H2O = L-glutamate + NH4(+). The catalysed reaction is UTP + NH4(+) + ATP = CTP + ADP + phosphate + 2 H(+). It functions in the pathway pyrimidine metabolism; CTP biosynthesis via de novo pathway; CTP from UDP: step 2/2. Its activity is regulated as follows. Allosterically activated by GTP, when glutamine is the substrate; GTP has no effect on the reaction when ammonia is the substrate. The allosteric effector GTP functions by stabilizing the protein conformation that binds the tetrahedral intermediate(s) formed during glutamine hydrolysis. Inhibited by the product CTP, via allosteric rather than competitive inhibition. In terms of biological role, catalyzes the ATP-dependent amination of UTP to CTP with either L-glutamine or ammonia as the source of nitrogen. Regulates intracellular CTP levels through interactions with the four ribonucleotide triphosphates. The sequence is that of CTP synthase from Pyrobaculum aerophilum (strain ATCC 51768 / DSM 7523 / JCM 9630 / CIP 104966 / NBRC 100827 / IM2).